Reading from the N-terminus, the 187-residue chain is 1,6-anhydro-N-acetylmuramyl-L-alanine amidase AmpD (187 aa).

One can recognise an N-acetylmuramoyl-L-alanine amidase domain in the interval threonine 29–proline 167. Residue histidine 34 participates in Zn(2+) binding. Residue glutamate 116 is the Proton acceptor of the active site. 2 residues coordinate Zn(2+): histidine 154 and aspartate 164.

Belongs to the N-acetylmuramoyl-L-alanine amidase 2 family. The cofactor is Zn(2+).

It is found in the cytoplasm. It catalyses the reaction Hydrolyzes the link between N-acetylmuramoyl residues and L-amino acid residues in certain cell-wall glycopeptides.. Functionally, involved in cell wall peptidoglycan recycling. Specifically cleaves the amide bond between the lactyl group of N-acetylmuramic acid and the alpha-amino group of the L-alanine in degradation products containing an anhydro N-acetylmuramyl moiety. This Enterobacter cloacae protein is 1,6-anhydro-N-acetylmuramyl-L-alanine amidase AmpD.